Consider the following 167-residue polypeptide: L-alanine exporter AlaE (167 aa).

Transmembrane regions (helical) follow at residues 25–45 (GTEF…TGII), 50–70 (IAGM…ALMI), 105–125 (FQVP…GGLV), and 129–149 (LGAA…LNWV).

This sequence belongs to the AlaE exporter family.

It localises to the cell inner membrane. In terms of biological role, exports L-alanine. This chain is L-alanine exporter AlaE, found in Pantoea sp. (strain At-9b).